A 124-amino-acid polypeptide reads, in one-letter code: Large ribosomal subunit protein bL12 (124 aa).

It belongs to the bacterial ribosomal protein bL12 family. Homodimer. Part of the ribosomal stalk of the 50S ribosomal subunit. Forms a multimeric L10(L12)X complex, where L10 forms an elongated spine to which 2 to 4 L12 dimers bind in a sequential fashion. Binds GTP-bound translation factors.

Forms part of the ribosomal stalk which helps the ribosome interact with GTP-bound translation factors. Is thus essential for accurate translation. This is Large ribosomal subunit protein bL12 from Borreliella burgdorferi (strain ZS7) (Borrelia burgdorferi).